Consider the following 583-residue polypeptide: Aspartate--tRNA ligase (583 aa).

Glu174 is a binding site for L-aspartate. The tract at residues 198 to 201 (QITK) is aspartate. Arg220 serves as a coordination point for L-aspartate. Residues 220-222 (RDE) and Gln229 contribute to the ATP site. His443 lines the L-aspartate pocket. Glu477 contributes to the ATP binding site. Position 484 (Arg484) interacts with L-aspartate. Residue 529–532 (GLDR) coordinates ATP.

It belongs to the class-II aminoacyl-tRNA synthetase family. Type 1 subfamily. Homodimer.

It is found in the cytoplasm. It carries out the reaction tRNA(Asp) + L-aspartate + ATP = L-aspartyl-tRNA(Asp) + AMP + diphosphate. Functionally, catalyzes the attachment of L-aspartate to tRNA(Asp) in a two-step reaction: L-aspartate is first activated by ATP to form Asp-AMP and then transferred to the acceptor end of tRNA(Asp). The sequence is that of Aspartate--tRNA ligase from Streptococcus thermophilus (strain CNRZ 1066).